The primary structure comprises 197 residues: Signal peptidase complex catalytic subunit SEC11 (197 aa).

Residues 1 to 14 are Cytoplasmic-facing; the sequence is MLSSLAPYMANPRQ. The chain crosses the membrane as a helical; Signal-anchor for type II membrane protein span at residues 15–33; that stretch reads TLTQVLNFALVLSTAFMLW. The Lumenal segment spans residues 34–197; that stretch reads KGLSVITNST…MGLMVVLQRE (164 aa). Asparagine 41 carries N-linked (GlcNAc...) asparagine glycosylation. Residues serine 53 and histidine 92 each act as charge relay system in the active site. Residues 102 to 115 are compositionally biased toward basic and acidic residues; it reads PGREDKKNVKKGGE. Residues 102 to 134 are disordered; sequence PGREDKKNVKKGGEEGEETSSTPSQKLLTKGDN. The active-site Charge relay system is the aspartate 139. The interval 183–194 is C-terminal short (CTS) helix; the sequence is VLLGFMGLMVVL.

It belongs to the peptidase S26B family. In terms of assembly, component of the signal peptidase complex (SPC) composed of a catalytic subunit SEC11 and three accessory subunits SPC1, SPC2 and SPC3. The complex induces a local thinning of the ER membrane which is used to measure the length of the signal peptide (SP) h-region of protein substrates. This ensures the selectivity of the complex towards h-regions shorter than 18-20 amino acids. SPC associates with the translocon complex.

It localises to the endoplasmic reticulum membrane. The catalysed reaction is Cleavage of hydrophobic, N-terminal signal or leader sequences from secreted and periplasmic proteins.. In terms of biological role, catalytic component of the signal peptidase complex (SPC) which catalyzes the cleavage of N-terminal signal sequences from nascent proteins as they are translocated into the lumen of the endoplasmic reticulum. Specifically cleaves N-terminal signal peptides that contain a hydrophobic alpha-helix (h-region) shorter than 18-20 amino acids. The sequence is that of Signal peptidase complex catalytic subunit SEC11 (SEC11) from Paracoccidioides brasiliensis (strain Pb18).